Reading from the N-terminus, the 384-residue chain is Guanine nucleotide-binding protein alpha-1 subunit (384 aa).

The segment at 1 to 22 is disordered; the sequence is MGSLCSRNKHYSQADDEENTQT. The N-myristoyl glycine moiety is linked to residue glycine 2. Cysteine 5 carries the S-palmitoyl cysteine lipid modification. A G-alpha domain is found at 38–384; sequence HIQKLLLLGA…RRNLFEAGLL (347 aa). A G1 motif region spans residues 41–54; sequence KLLLLGAGDSGKST. GTP contacts are provided by aspartate 49, serine 50, glycine 51, lysine 52, serine 53, threonine 54, aspartate 163, leucine 188, threonine 194, glycine 222, asparagine 288, lysine 289, aspartate 291, and alanine 356. Serine 53 is a binding site for Mg(2+). The tract at residues 186-194 is G2 motif; sequence DVLFARIRT. A Mg(2+)-binding site is contributed by threonine 194. The segment at 215–224 is G3 motif; it reads YRLFDVGGQR. Residues 284–291 form a G4 motif region; it reads MLFLNKFD. The interval 354 to 359 is G5 motif; the sequence is TTALDQ.

Belongs to the G-alpha family. As to quaternary structure, g proteins are composed of 3 units; alpha, beta and gamma. The alpha chain contains the guanine nucleotide binding site. Requires Mg(2+) as cofactor.

Functionally, guanine nucleotide-binding proteins (G proteins) are involved as modulators or transducers in various transmembrane signaling systems. In Solanum tuberosum (Potato), this protein is Guanine nucleotide-binding protein alpha-1 subunit (GPA1).